A 156-amino-acid chain; its full sequence is Probable histone H2A.6 (156 aa).

2 disordered regions span residues 1–26 (MDVG…KKPV) and 129–156 (KKTA…QARS). Over residues 9 to 26 (AAKKAVGRKLGGPKKKPV) the composition is skewed to basic residues. Positions 130 to 147 (KTAEKADKPAKASKDKAA) are enriched in basic and acidic residues. The short motif at 149–152 (SPKK) is the SPKK motif element.

It belongs to the histone H2A family. As to quaternary structure, the nucleosome is a histone octamer containing two molecules each of H2A, H2B, H3 and H4 assembled in one H3-H4 heterotetramer and two H2A-H2B heterodimers. The octamer wraps approximately 147 bp of DNA.

Its subcellular location is the nucleus. The protein localises to the chromosome. In terms of biological role, core component of nucleosome. Nucleosomes wrap and compact DNA into chromatin, limiting DNA accessibility to the cellular machineries which require DNA as a template. Histones thereby play a central role in transcription regulation, DNA repair, DNA replication and chromosomal stability. DNA accessibility is regulated via a complex set of post-translational modifications of histones, also called histone code, and nucleosome remodeling. This chain is Probable histone H2A.6, found in Oryza sativa subsp. indica (Rice).